The chain runs to 190 residues: Pancreatic IgW, short secretory form (190 aa).

Residues 53–145 (PNITALVPSV…PPSNFRSMIS (93 aa)) form the Ig-like C1-type domain. N-linked (GlcNAc...) asparagine glycosylation occurs at N54. A disulfide bridge connects residues C74 and C131. N179 carries N-linked (GlcNAc...) asparagine glycosylation.

As to expression, expressed in pancreas, spleen, epigonal organ and at low levels in several other tissues.

It is found in the secreted. The chain is Pancreatic IgW, short secretory form from Ginglymostoma cirratum (Nurse shark).